Consider the following 105-residue polypeptide: Large ribosomal subunit protein uL24 (105 aa).

Belongs to the universal ribosomal protein uL24 family. Part of the 50S ribosomal subunit.

Its function is as follows. One of two assembly initiator proteins, it binds directly to the 5'-end of the 23S rRNA, where it nucleates assembly of the 50S subunit. One of the proteins that surrounds the polypeptide exit tunnel on the outside of the subunit. The polypeptide is Large ribosomal subunit protein uL24 (Mycolicibacterium vanbaalenii (strain DSM 7251 / JCM 13017 / BCRC 16820 / KCTC 9966 / NRRL B-24157 / PYR-1) (Mycobacterium vanbaalenii)).